A 375-amino-acid polypeptide reads, in one-letter code: Trichodiene synthase (375 aa).

Belongs to the trichodiene synthase family.

It catalyses the reaction (2E,6E)-farnesyl diphosphate = trichodiene + diphosphate. The protein operates within sesquiterpene biosynthesis; trichothecene biosynthesis. Functionally, TS is a member of the terpene cyclase group of enzymes. It catalyzes the isomerization and cyclization of farnesyl pyro-phosphate to form trichodiene, the first cyclic intermediate in the biosynthetic pathway for trichothecenes. It serves to branch trichothecene biosynthesis from the isoprenoid pathway. The polypeptide is Trichodiene synthase (TRI5) (Fusarium cortaderiae).